Consider the following 726-residue polypeptide: Prolyl endopeptidase-like (726 aa).

S138 is modified (phosphoserine). Catalysis depends on charge relay system residues S558, D644, and H689.

Belongs to the peptidase S9A family. As to quaternary structure, homodimer. Interacts with the AP-1 complex.

The protein resides in the cytoplasm. It localises to the cytosol. The protein localises to the golgi apparatus. It is found in the trans-Golgi network. Its subcellular location is the cytoskeleton. The protein resides in the nucleus. Functionally, serine peptidase whose precise substrate specificity remains unclear. Does not cleave peptides after a arginine or lysine residue. Regulates trans-Golgi network morphology and sorting by regulating the membrane binding of the AP-1 complex. May play a role in the regulation of synaptic vesicle exocytosis. In Rattus norvegicus (Rat), this protein is Prolyl endopeptidase-like (Prepl).